The following is a 245-amino-acid chain: Thiopurine S-methyltransferase (245 aa).

The residue at position 14 (Ser-14) is a Phosphoserine. 29–40 (WQGKWVTGKTIF) serves as a coordination point for S-adenosyl-L-methionine. Phe-40 contributes to the substrate binding site. Lys-58 bears the N6-acetyllysine mark. Leu-69, Glu-90, and Arg-152 together coordinate S-adenosyl-L-methionine.

The protein belongs to the class I-like SAM-binding methyltransferase superfamily. TPMT family. As to quaternary structure, monomer.

The protein resides in the cytoplasm. The catalysed reaction is S-adenosyl-L-methionine + a thiopurine = S-adenosyl-L-homocysteine + a thiopurine S-methylether.. In Equus caballus (Horse), this protein is Thiopurine S-methyltransferase (TPMT).